A 126-amino-acid polypeptide reads, in one-letter code: Large ribosomal subunit protein bL12 (126 aa).

Belongs to the bacterial ribosomal protein bL12 family. As to quaternary structure, homodimer. Part of the ribosomal stalk of the 50S ribosomal subunit. Forms a multimeric L10(L12)X complex, where L10 forms an elongated spine to which 2 to 4 L12 dimers bind in a sequential fashion. Binds GTP-bound translation factors.

Functionally, forms part of the ribosomal stalk which helps the ribosome interact with GTP-bound translation factors. Is thus essential for accurate translation. The polypeptide is Large ribosomal subunit protein bL12 (Streptococcus pyogenes serotype M28 (strain MGAS6180)).